Consider the following 577-residue polypeptide: Sulfite reductase [NADPH] hemoprotein beta-component 2 (577 aa).

Residues Cys441, Cys447, Cys486, and Cys490 each contribute to the [4Fe-4S] cluster site. Cys490 contacts siroheme.

This sequence belongs to the nitrite and sulfite reductase 4Fe-4S domain family. Alpha(8)-beta(8). The alpha component is a flavoprotein, the beta component is a hemoprotein. Requires siroheme as cofactor. [4Fe-4S] cluster serves as cofactor.

It carries out the reaction hydrogen sulfide + 3 NADP(+) + 3 H2O = sulfite + 3 NADPH + 4 H(+). It functions in the pathway sulfur metabolism; hydrogen sulfide biosynthesis; hydrogen sulfide from sulfite (NADPH route): step 1/1. Functionally, component of the sulfite reductase complex that catalyzes the 6-electron reduction of sulfite to sulfide. This is one of several activities required for the biosynthesis of L-cysteine from sulfate. This is Sulfite reductase [NADPH] hemoprotein beta-component 2 from Pectobacterium carotovorum subsp. carotovorum (strain PC1).